Here is a 285-residue protein sequence, read N- to C-terminus: Pantothenate synthetase (285 aa).

30-37 (MGNLHDGH) is an ATP binding site. The active-site Proton donor is the histidine 37. Glutamine 61 serves as a coordination point for (R)-pantoate. Glutamine 61 lines the beta-alanine pocket. 148 to 151 (GEKD) is an ATP binding site. Residue glutamine 154 coordinates (R)-pantoate. Residue 185 to 188 (RSSR) participates in ATP binding.

This sequence belongs to the pantothenate synthetase family. Homodimer.

Its subcellular location is the cytoplasm. The enzyme catalyses (R)-pantoate + beta-alanine + ATP = (R)-pantothenate + AMP + diphosphate + H(+). It functions in the pathway cofactor biosynthesis; (R)-pantothenate biosynthesis; (R)-pantothenate from (R)-pantoate and beta-alanine: step 1/1. Catalyzes the condensation of pantoate with beta-alanine in an ATP-dependent reaction via a pantoyl-adenylate intermediate. The polypeptide is Pantothenate synthetase (Alcanivorax borkumensis (strain ATCC 700651 / DSM 11573 / NCIMB 13689 / SK2)).